Here is a 238-residue protein sequence, read N- to C-terminus: Ubiquinone biosynthesis O-methyltransferase (238 aa).

Arg39, Gly59, Asp80, and Met124 together coordinate S-adenosyl-L-methionine.

Belongs to the methyltransferase superfamily. UbiG/COQ3 family.

It catalyses the reaction a 3-demethylubiquinol + S-adenosyl-L-methionine = a ubiquinol + S-adenosyl-L-homocysteine + H(+). The enzyme catalyses a 3-(all-trans-polyprenyl)benzene-1,2-diol + S-adenosyl-L-methionine = a 2-methoxy-6-(all-trans-polyprenyl)phenol + S-adenosyl-L-homocysteine + H(+). It participates in cofactor biosynthesis; ubiquinone biosynthesis. In terms of biological role, O-methyltransferase that catalyzes the 2 O-methylation steps in the ubiquinone biosynthetic pathway. This chain is Ubiquinone biosynthesis O-methyltransferase, found in Aeromonas salmonicida (strain A449).